A 339-amino-acid chain; its full sequence is Dihydroorotate dehydrogenase (quinone) (339 aa).

Residues 62 to 66 and Thr86 each bind FMN; that span reads AGMDK. Lys66 is a binding site for substrate. Residue 111 to 115 participates in substrate binding; that stretch reads NRMGF. The FMN site is built by Asn139 and Asn172. Asn172 provides a ligand contact to substrate. Ser175 serves as the catalytic Nucleophile. Asn177 is a binding site for substrate. Positions 217 and 245 each coordinate FMN. 246-247 is a binding site for substrate; it reads NT. FMN contacts are provided by residues Gly268, Gly297, and 318 to 319; that span reads FS.

This sequence belongs to the dihydroorotate dehydrogenase family. Type 2 subfamily. As to quaternary structure, monomer. It depends on FMN as a cofactor.

Its subcellular location is the cell membrane. It catalyses the reaction (S)-dihydroorotate + a quinone = orotate + a quinol. It participates in pyrimidine metabolism; UMP biosynthesis via de novo pathway; orotate from (S)-dihydroorotate (quinone route): step 1/1. Its function is as follows. Catalyzes the conversion of dihydroorotate to orotate with quinone as electron acceptor. This chain is Dihydroorotate dehydrogenase (quinone), found in Shewanella halifaxensis (strain HAW-EB4).